The following is a 60-amino-acid chain: Large ribosomal subunit protein uL30 (60 aa).

This sequence belongs to the universal ribosomal protein uL30 family. Part of the 50S ribosomal subunit.

This is Large ribosomal subunit protein uL30 from Nocardioides sp. (strain ATCC BAA-499 / JS614).